The chain runs to 211 residues: Thymidylate kinase (211 aa).

Residue 10–17 coordinates ATP; that stretch reads GLDGSGKT.

This sequence belongs to the thymidylate kinase family.

It catalyses the reaction dTMP + ATP = dTDP + ADP. Its function is as follows. Phosphorylation of dTMP to form dTDP in both de novo and salvage pathways of dTTP synthesis. This chain is Thymidylate kinase, found in Blochmanniella floridana.